The sequence spans 282 residues: 2,3,4,5-tetrahydropyridine-2,6-dicarboxylate N-succinyltransferase (282 aa).

Positions 109 and 146 each coordinate substrate.

The protein belongs to the transferase hexapeptide repeat family. As to quaternary structure, homotrimer.

It localises to the cytoplasm. The catalysed reaction is (S)-2,3,4,5-tetrahydrodipicolinate + succinyl-CoA + H2O = (S)-2-succinylamino-6-oxoheptanedioate + CoA. It participates in amino-acid biosynthesis; L-lysine biosynthesis via DAP pathway; LL-2,6-diaminopimelate from (S)-tetrahydrodipicolinate (succinylase route): step 1/3. This chain is 2,3,4,5-tetrahydropyridine-2,6-dicarboxylate N-succinyltransferase, found in Bartonella henselae (strain ATCC 49882 / DSM 28221 / CCUG 30454 / Houston 1) (Rochalimaea henselae).